Consider the following 314-residue polypeptide: MSRPRRRGRDIHGVLLLDKPQGMSSNDVLQKVKRIYNANRAGHTGALDPLATGMLPICLGEATKFSQYLLDSDKRYRVIARLGQRTDTSDADGQIVQERPVTFSAEQLASALETFRGDIEQIPSMYSALKYQGRKLYEYARQGIEVPREARPITVYELLFIRHEGNELELEVHCSKGTYIRTIIDDLGEKLGCGAHVTYLRRLTVSKYPVDRMVTLEHLQTLVAQAEQQGVPAAQLLDPLLMPMDSPASDYPVVNLPLTSSVYFKNGNPVRTTGAPLKGLVRVTEGEDDKFIGMGEIDDEGRVAPRRLVVEYPA.

H43 contacts substrate. The active-site Nucleophile is D48. Residues Y76, Y179, and L200 each contribute to the substrate site.

The protein belongs to the pseudouridine synthase TruB family. Type 1 subfamily.

It carries out the reaction uridine(55) in tRNA = pseudouridine(55) in tRNA. Its function is as follows. Responsible for synthesis of pseudouridine from uracil-55 in the psi GC loop of transfer RNAs. The polypeptide is tRNA pseudouridine synthase B (Salmonella typhi).